A 166-amino-acid chain; its full sequence is UPF0260 protein GbCGDNIH1_2046 (166 aa).

The tract at residues R147–S166 is disordered. The span at P154–S166 shows a compositional bias: basic and acidic residues.

This sequence belongs to the UPF0260 family.

This chain is UPF0260 protein GbCGDNIH1_2046, found in Granulibacter bethesdensis (strain ATCC BAA-1260 / CGDNIH1).